The following is a 332-amino-acid chain: GTP cyclohydrolase-2 (332 aa).

Disordered regions lie at residues 1 to 20 (MASK…SETH) and 25 to 46 (PLLS…IPPE). Residues 29 to 41 (PTLTPSHIPSQTP) are compositionally biased toward polar residues. 171-175 (RIHSE) provides a ligand contact to GTP. Zn(2+) is bound by residues Cys-176, Cys-187, and Cys-189. GTP contacts are provided by residues Gln-192, 214–216 (EGR), and Thr-236. The active-site Proton acceptor is the Asp-248. Residue Arg-250 is the Nucleophile of the active site. GTP is bound by residues Thr-271 and Lys-276.

Belongs to the GTP cyclohydrolase II family. Requires Zn(2+) as cofactor.

It catalyses the reaction GTP + 4 H2O = 2,5-diamino-6-hydroxy-4-(5-phosphoribosylamino)-pyrimidine + formate + 2 phosphate + 3 H(+). Its pathway is cofactor biosynthesis; riboflavin biosynthesis; 5-amino-6-(D-ribitylamino)uracil from GTP: step 1/4. Its function is as follows. Catalyzes the conversion of GTP to 2,5-diamino-6-ribosylamino-4(3H)-pyrimidinone 5'-phosphate (DARP), formate and pyrophosphate. The sequence is that of GTP cyclohydrolase-2 (RIB1) from Meyerozyma guilliermondii (strain ATCC 6260 / CBS 566 / DSM 6381 / JCM 1539 / NBRC 10279 / NRRL Y-324) (Yeast).